Here is a 216-residue protein sequence, read N- to C-terminus: N-glycosylase/DNA lyase (216 aa).

Positions 27, 48, and 59 each coordinate 8-oxoguanine. The tract at residues 106–170 (EHYYENMVAL…LDYRLKKINP (65 aa)) is helix-hairpin-helix. Lys-130 (schiff-base intermediate with DNA) is an active-site residue. 2 residues coordinate 8-oxoguanine: Phe-134 and Pro-160. Asp-162 is a catalytic residue. Residues Asp-190 and Trp-194 each contribute to the 8-oxoguanine site.

It belongs to the archaeal N-glycosylase/DNA lyase (AGOG) family.

It carries out the reaction 2'-deoxyribonucleotide-(2'-deoxyribose 5'-phosphate)-2'-deoxyribonucleotide-DNA = a 3'-end 2'-deoxyribonucleotide-(2,3-dehydro-2,3-deoxyribose 5'-phosphate)-DNA + a 5'-end 5'-phospho-2'-deoxyribonucleoside-DNA + H(+). Its function is as follows. DNA repair enzyme that is part of the base excision repair (BER) pathway; protects from oxidative damage by removing the major product of DNA oxidation, 8-oxoguanine (GO), from single- and double-stranded DNA substrates. In Nanoarchaeum equitans (strain Kin4-M), this protein is N-glycosylase/DNA lyase.